We begin with the raw amino-acid sequence, 319 residues long: Acetyl-coenzyme A carboxylase carboxyl transferase subunit alpha (319 aa).

The region spanning 39–296 (EINRLRSKSI…KTQLLLDLTE (258 aa)) is the CoA carboxyltransferase C-terminal domain.

Belongs to the AccA family. Acetyl-CoA carboxylase is a heterohexamer composed of biotin carboxyl carrier protein (AccB), biotin carboxylase (AccC) and two subunits each of ACCase subunit alpha (AccA) and ACCase subunit beta (AccD).

Its subcellular location is the cytoplasm. The enzyme catalyses N(6)-carboxybiotinyl-L-lysyl-[protein] + acetyl-CoA = N(6)-biotinyl-L-lysyl-[protein] + malonyl-CoA. The protein operates within lipid metabolism; malonyl-CoA biosynthesis; malonyl-CoA from acetyl-CoA: step 1/1. Component of the acetyl coenzyme A carboxylase (ACC) complex. First, biotin carboxylase catalyzes the carboxylation of biotin on its carrier protein (BCCP) and then the CO(2) group is transferred by the carboxyltransferase to acetyl-CoA to form malonyl-CoA. The chain is Acetyl-coenzyme A carboxylase carboxyl transferase subunit alpha from Blochmanniella pennsylvanica (strain BPEN).